A 162-amino-acid chain; its full sequence is Interleukin-15 (162 aa).

A signal peptide spans 1–29; that stretch reads MRILKPYLRSTSIQCYLCLLLNSHFLTEA. Residues 30–48 constitute a propeptide that is removed on maturation; the sequence is GIHVFILGCISAGLPKTEA. 2 cysteine pairs are disulfide-bonded: C83/C133 and C90/C136. Residues N113, N121, and N127 are each glycosylated (N-linked (GlcNAc...) asparagine).

The protein belongs to the IL-15/IL-21 family.

It localises to the secreted. Functionally, cytokine that plays a major role in the development of inflammatory and protective immune responses to microbial invaders and parasites by modulating immune cells of both the innate and adaptive immune systems. Stimulates the proliferation of natural killer cells, T-cells and B-cells and promotes the secretion of several cytokines. In monocytes, induces the production of IL8 and monocyte chemotactic protein 1/CCL2, two chemokines that attract neutrophils and monocytes respectively to sites of infection. Unlike most cytokines, which are secreted in soluble form, IL15 is expressed in association with its high affinity IL15RA on the surface of IL15-producing cells and delivers signals to target cells that express IL2RB and IL2RG receptor subunits. Binding to its receptor triggers the phosphorylation of JAK1 and JAK3 and the recruitment and subsequent phosphorylation of signal transducer and activator of transcription-3/STAT3 and STAT5. In mast cells, induces the rapid tyrosine phosphorylation of STAT6 and thereby controls mast cell survival and release of cytokines such as IL4. In Bubalus bubalis (Domestic water buffalo), this protein is Interleukin-15 (IL15).